The primary structure comprises 179 residues: MRNRRNIFLIGPMGAGKTTVGRLLARALGMEFWDSDKEIERRTGVTVPMIFEYEGEAGFRRRESEVIADLTGKERIVLATGGGSVLAAENREHLAARGLVIYLQCSVQKQLERTHKDMNRPLLQTENPRQRLEELLRVRDPIYRELADYVVDTGQHSSRSAVRRIINAYEKSGTRLRTE.

Residue 14–19 (GAGKTT) participates in ATP binding. Threonine 18 is a binding site for Mg(2+). Substrate is bound by residues aspartate 36, arginine 60, and glycine 82. Arginine 120 serves as a coordination point for ATP. Substrate is bound at residue arginine 139.

This sequence belongs to the shikimate kinase family. Monomer. Mg(2+) is required as a cofactor.

Its subcellular location is the cytoplasm. It catalyses the reaction shikimate + ATP = 3-phosphoshikimate + ADP + H(+). It functions in the pathway metabolic intermediate biosynthesis; chorismate biosynthesis; chorismate from D-erythrose 4-phosphate and phosphoenolpyruvate: step 5/7. In terms of biological role, catalyzes the specific phosphorylation of the 3-hydroxyl group of shikimic acid using ATP as a cosubstrate. The sequence is that of Shikimate kinase from Methylococcus capsulatus (strain ATCC 33009 / NCIMB 11132 / Bath).